We begin with the raw amino-acid sequence, 419 residues long: NF-kappa-B essential modulator (419 aa).

The segment at 1–197 (MNRHLWKSQL…REALQQQHSV (197 aa)) is required for interaction with and ubiquitination by MARCHF2. A phosphoserine; by IKKB mark is found at Ser-31 and Ser-43. The tract at residues 44 to 111 (EQGAPETLQR…KLVERLGLEK (68 aa)) is interaction with CHUK/IKBKB. A coiled-coil region spans residues 49–356 (ETLQRCLEEN…CQESARIEDM (308 aa)). Ser-68 carries the post-translational modification Phosphoserine. A Phosphoserine; by ATM modification is found at Ser-85. Glycyl lysine isopeptide (Lys-Gly) (interchain with G-Cter in ubiquitin) cross-links involve residues Lys-111, Lys-139, Lys-143, Lys-226, Lys-246, and Lys-264. Residues 150 to 257 (LGELQESQSR…SVVGSERKRG (108 aa)) form an interaction with TANK region. Positions 242–350 (DNHIKSSVVG…SKLKASCQES (109 aa)) are ubiquitin-binding (UBAN). Residues 246 to 365 (KSSVVGSERK…MRKRHVEVSQ (120 aa)) form a self-association region. The tract at residues 251-419 (GSERKRGMQL…LQIHVMECIE (169 aa)) is required for interaction with TNFAIP3. A Glycyl lysine isopeptide (Lys-Gly) (interchain with G-Cter in SUMO); alternate cross-link involves residue Lys-277. Lys-277 participates in a covalent cross-link: Glycyl lysine isopeptide (Lys-Gly) (interchain with G-Cter in ubiquitin); alternate. Residues Lys-283, Lys-285, Lys-292, and Lys-302 each participate in a glycyl lysine isopeptide (Lys-Gly) (interchain with G-Cter in ubiquitin) cross-link. Lys-309 is covalently cross-linked (Glycyl lysine isopeptide (Lys-Gly) (interchain with G-Cter in SUMO); alternate). Residue Lys-309 forms a Glycyl lysine isopeptide (Lys-Gly) (interchain with G-Cter in ubiquitin); alternate linkage. Residues Lys-321 and Lys-325 each participate in a glycyl lysine isopeptide (Lys-Gly) (interchain with G-Cter in ubiquitin) cross-link. Positions 322–343 (LAEKKELLQEQLEQLQREYSKL) are leucine-zipper. Lys-326 participates in a covalent cross-link: Glycyl lysine isopeptide (Lys-Gly) (interchain with G-Cter in ubiquitin and interchain with MARCHF2). Positions 358–395 (KRHVEVSQAPLPPAPAYLSSPLALPSQRRSPPEEPPDF) are disordered. Low complexity predominate over residues 373 to 386 (AYLSSPLALPSQRR). Ser-376 is subject to Phosphoserine; by IKKB. Residues 382–419 (PSQRRSPPEEPPDFCCPKCQYQAPDMDTLQIHVMECIE) form an interaction with CYLD region. Ser-387 is subject to Phosphoserine. The CCHC NOA-type zinc finger occupies 389–419 (PEEPPDFCCPKCQYQAPDMDTLQIHVMECIE). Cys-397 is a Zn(2+) binding site. A Glycyl lysine isopeptide (Lys-Gly) (interchain with G-Cter in ubiquitin) cross-link involves residue Lys-399. Cys-400, His-413, and Cys-417 together coordinate Zn(2+).

Homodimer; disulfide-linked. Component of the I-kappa-B-kinase (IKK) core complex consisting of CHUK, IKBKB and IKBKG; probably four alpha/CHUK-beta/IKBKB dimers are associated with four gamma/IKBKG subunits. The IKK core complex seems to associate with regulatory or adapter proteins to form a IKK-signalosome holo-complex. The IKK complex associates with TERF2IP/RAP1, leading to promote IKK-mediated phosphorylation of RELA/p65. Part of a complex composed of NCOA2, NCOA3, CHUK/IKKA, IKBKB, IKBKG and CREBBP. Interacts with COPS3, CYLD, NALP2, TRPC4AP and PIDD1. Interacts with ATM; the complex is exported from the nucleus. Interacts with TRAF6. Interacts with IKBKE. Interacts with TANK; the interaction is enhanced by IKBKE and TBK1. Part of a ternary complex consisting of TANK, IKBKB and IKBKG. Interacts with ZFAND5. Interacts with RIPK2. Interacts with TNIP1 and TNFAIP3; TNIP1 facilitates the TNFAIP3-mediated de-ubiquitination of IKBKG. Interacts with TNFAIP3; the interaction is induced by TNF stimulation and by polyubiquitin. Binds (via UBAN region) polyubiquitin; binds both 'Lys-63'-linked and linear polyubiquitin, with higher affinity for linear ubiquitin. Interacts with NLRP10. Interacts with TANK; this interaction increases in response to DNA damage. Interacts with USP10; this interaction increases in response to DNA damage. Interacts with ZC3H12A; this interaction increases in response to DNA damage. Interacts with IFIT5; the interaction synergizes the recruitment of IKK to MAP3K7 and enhances IKK phosphorylation. Interacts with TRIM29; this interaction induces IKBKG/NEMO ubiquitination and proteolytic degradation. Interacts with TRIM13; this interaction leads to IKBKG/NEMO ubiquitination. Interacts with ARFIP2. Interacts with RIPK1. Interacts with (ubiquitinated) BCL10; interaction with polyubiquitinated BCL10 via both 'Lys-63'-linked and linear ubiquitin is required for TCR-induced NF-kappa-B activation. Interacts with MARCHF2; during the late stages of macrophage viral and bacterial infection; the interaction leads to ubiquitination and degradation of IKBKG/NEMO. In terms of assembly, (Microbial infection) Interacts with Molluscum contagiosum virus protein MC005; this interaction inhibits NF-kappa-B activation. As to quaternary structure, (Microbial infection) Interacts with HTLV-1 Tax oncoprotein; the interaction activates IKBKG. (Microbial infection) Interacts with Shigella flexneri ipah9.8; the interaction promotes TNIP1-dependent 'Lys-27'-linked polyubiquitination of IKBKG which perturbs NF-kappa-B activation during bacterial infection. In terms of assembly, (Microbial infection) Interacts with SARS coronavirus-2/SARS-CoV-2 virus protein ORF9B (via N-terminus); the interaction inhibits polyubiquitination through 'Lys-63' and NF-kappa-B activation. In terms of processing, phosphorylation at Ser-68 attenuates aminoterminal homodimerization. Post-translationally, polyubiquitinated on Lys-285 via 'Lys-63'-linked ubiquitin; the ubiquitination is mediated downstream of NOD2 and RIPK2 and probably plays a role in signaling by facilitating interactions with ubiquitin domain-containing proteins and activates the NF-kappa-B pathway. Polyubiquitinated on Lys-285 and Lys-399 through 'Lys-63'-linked ubiquitin; the ubiquitination is mediated by BCL10, MALT1 and TRAF6 and probably plays a role in signaling by facilitating interactions with ubiquitin domain-containing proteins and activates the NF-kappa-B pathway. Monoubiquitinated on Lys-277 and Lys-309; promotes nuclear export. Polyubiquitinated through 'Lys-27' by TRIM23; involved in antiviral innate and inflammatory responses. Linear polyubiquitinated on Lys-111, Lys-143, Lys-226, Lys-246, Lys-264, Lys-277, Lys-285, Lys-292, Lys-302, Lys-309 and Lys-326; the head-to-tail polyubiquitination is mediated by the LUBAC complex and plays a key role in NF-kappa-B activation. Deubiquitinated by USP10 in a TANK-dependent and -independent manner, leading to the negative regulation of NF-kappa-B signaling upon DNA damage. Ubiquitinated at Lys-326 by MARCHF2 following bacterial and viral infection which leads to its degradation. Polyubiquitinated via 'Lys-29'-linked ubiquitin; leading to lysosomal degradation. Sumoylated on Lys-277 and Lys-309 with SUMO1; the modification results in phosphorylation of Ser-85 by ATM leading to a replacement of the sumoylation by mono-ubiquitination on these residues. In terms of processing, neddylated by TRIM40, resulting in stabilization of NFKBIA and down-regulation of NF-kappa-B activity. Post-translationally, (Microbial infection) Cleaved by hepatitis A virus (HAV) protease 3C allowing the virus to disrupt the host innate immune signaling. (Microbial infection) Deubiquitinated by Epstein-Barr virus BPLF1 on both 'Lys-48' and 'Lys-63'-linked ubiquitin chains; leading to NF-kappa-B signaling inhibition. In terms of processing, (Microbial infection) Polyubiquitinated on Lys-309 and Lys-321 via 'Lys-27'-linked ubiquitin by Shigella flexneri E3 ubiquitin-protein ligase ipah9.8, leading to its degradation by the proteasome. Post-translationally, (Microbial infection) Polyubiquitination through 'Lys-63' is interrupted by interaction with SARS coronavirus-2/SARS-CoV-2 virus protein ORF9B which inhibits the NF-kappa-B pathway. As to expression, heart, brain, placenta, lung, liver, skeletal muscle, kidney and pancreas.

The protein resides in the cytoplasm. Its subcellular location is the nucleus. In terms of biological role, regulatory subunit of the IKK core complex which phosphorylates inhibitors of NF-kappa-B thus leading to the dissociation of the inhibitor/NF-kappa-B complex and ultimately the degradation of the inhibitor. Its binding to scaffolding polyubiquitin plays a key role in IKK activation by multiple signaling receptor pathways. Can recognize and bind both 'Lys-63'-linked and linear polyubiquitin upon cell stimulation, with a much higher affinity for linear polyubiquitin. Could be implicated in NF-kappa-B-mediated protection from cytokine toxicity. Essential for viral activation of IRF3. Involved in TLR3- and IFIH1-mediated antiviral innate response; this function requires 'Lys-27'-linked polyubiquitination. (Microbial infection) Also considered to be a mediator for HTLV-1 Tax oncoprotein activation of NF-kappa-B. The polypeptide is NF-kappa-B essential modulator (Homo sapiens (Human)).